Here is a 314-residue protein sequence, read N- to C-terminus: 4-hydroxy-3-methylbut-2-enyl diphosphate reductase (314 aa).

Cysteine 12 provides a ligand contact to [4Fe-4S] cluster. (2E)-4-hydroxy-3-methylbut-2-enyl diphosphate is bound by residues histidine 43 and histidine 81. Residues histidine 43 and histidine 81 each coordinate dimethylallyl diphosphate. Positions 43 and 81 each coordinate isopentenyl diphosphate. A [4Fe-4S] cluster-binding site is contributed by cysteine 103. Residue histidine 131 coordinates (2E)-4-hydroxy-3-methylbut-2-enyl diphosphate. A dimethylallyl diphosphate-binding site is contributed by histidine 131. Histidine 131 is an isopentenyl diphosphate binding site. Glutamate 133 (proton donor) is an active-site residue. Position 170 (threonine 170) interacts with (2E)-4-hydroxy-3-methylbut-2-enyl diphosphate. Cysteine 198 lines the [4Fe-4S] cluster pocket. Positions 226, 228, and 271 each coordinate (2E)-4-hydroxy-3-methylbut-2-enyl diphosphate. 3 residues coordinate dimethylallyl diphosphate: serine 226, asparagine 228, and serine 271. 3 residues coordinate isopentenyl diphosphate: serine 226, asparagine 228, and serine 271.

Belongs to the IspH family. [4Fe-4S] cluster is required as a cofactor.

The enzyme catalyses isopentenyl diphosphate + 2 oxidized [2Fe-2S]-[ferredoxin] + H2O = (2E)-4-hydroxy-3-methylbut-2-enyl diphosphate + 2 reduced [2Fe-2S]-[ferredoxin] + 2 H(+). It carries out the reaction dimethylallyl diphosphate + 2 oxidized [2Fe-2S]-[ferredoxin] + H2O = (2E)-4-hydroxy-3-methylbut-2-enyl diphosphate + 2 reduced [2Fe-2S]-[ferredoxin] + 2 H(+). The protein operates within isoprenoid biosynthesis; dimethylallyl diphosphate biosynthesis; dimethylallyl diphosphate from (2E)-4-hydroxy-3-methylbutenyl diphosphate: step 1/1. It functions in the pathway isoprenoid biosynthesis; isopentenyl diphosphate biosynthesis via DXP pathway; isopentenyl diphosphate from 1-deoxy-D-xylulose 5-phosphate: step 6/6. Catalyzes the conversion of 1-hydroxy-2-methyl-2-(E)-butenyl 4-diphosphate (HMBPP) into a mixture of isopentenyl diphosphate (IPP) and dimethylallyl diphosphate (DMAPP). Acts in the terminal step of the DOXP/MEP pathway for isoprenoid precursor biosynthesis. This Bacillus subtilis (strain 168) protein is 4-hydroxy-3-methylbut-2-enyl diphosphate reductase.